Reading from the N-terminus, the 728-residue chain is Glycine--tRNA ligase (728 aa).

The N-terminal 32 residues, 1 to 32, are a transit peptide targeting the mitochondrion; that stretch reads MPCLLPTLLRATRAALLLQSPRVVAAPASQRL. Positions 52 to 108 constitute a WHEP-TRS domain; that stretch reads LLAPLRLAVRQQGDFVRKLKEDKAPQVDVDRAVAELKARKRVLEAKELALQPKDDIV. Lysine 193 carries the N6-acetyllysine modification. Position 288 (glutamate 288) interacts with glycine. ATP-binding positions include 320-322 and 331-332; these read RNE and RV. A glycine-binding site is contributed by glutamate 339. A Phosphotyrosine modification is found at tyrosine 442. 446 to 447 provides a ligand contact to ATP; that stretch reads EI. Lysine 490 carries the post-translational modification N6-acetyllysine. 565–567 lines the glycine pocket; it reads EPS. Arginine 572 lines the ATP pocket. A Phosphoserine modification is found at serine 689. Phosphothreonine is present on threonine 725.

The protein belongs to the class-II aminoacyl-tRNA synthetase family. As to quaternary structure, homodimer.

It is found in the cytoplasm. The protein resides in the mitochondrion. It localises to the cell projection. The protein localises to the axon. Its subcellular location is the secreted. It is found in the extracellular exosome. It carries out the reaction tRNA(Gly) + glycine + ATP = glycyl-tRNA(Gly) + AMP + diphosphate. The enzyme catalyses 2 ATP + H(+) = P(1),P(4)-bis(5'-adenosyl) tetraphosphate + diphosphate. Functionally, catalyzes the ATP-dependent ligation of glycine to the 3'-end of its cognate tRNA, via the formation of an aminoacyl-adenylate intermediate (Gly-AMP). Also produces diadenosine tetraphosphate (Ap4A), a universal pleiotropic signaling molecule needed for cell regulation pathways, by direct condensation of 2 ATPs. Thereby, may play a special role in Ap4A homeostasis. The chain is Glycine--tRNA ligase (Gars1) from Rattus norvegicus (Rat).